Here is a 77-residue protein sequence, read N- to C-terminus: Acyl carrier protein (77 aa).

A Carrier domain is found at 2–77 (SDVADRVKKI…DAVKFISEAS (76 aa)). The residue at position 37 (Ser37) is an O-(pantetheine 4'-phosphoryl)serine.

It belongs to the acyl carrier protein (ACP) family. In terms of processing, 4'-phosphopantetheine is transferred from CoA to a specific serine of apo-ACP by AcpS. This modification is essential for activity because fatty acids are bound in thioester linkage to the sulfhydryl of the prosthetic group.

It is found in the cytoplasm. Its pathway is lipid metabolism; fatty acid biosynthesis. Carrier of the growing fatty acid chain in fatty acid biosynthesis. This is Acyl carrier protein from Ruegeria sp. (strain TM1040) (Silicibacter sp.).